A 183-amino-acid polypeptide reads, in one-letter code: Phosphopantetheine adenylyltransferase (183 aa).

Residue serine 8 coordinates substrate. Residues 8 to 9 (SF) and histidine 16 each bind ATP. Substrate contacts are provided by lysine 40, threonine 72, and arginine 86. ATP-binding positions include 87–89 (GLR), glutamate 97, and 122–128 (YSFLSSS).

Belongs to the bacterial CoaD family. In terms of assembly, homohexamer. The cofactor is Mg(2+).

It is found in the cytoplasm. The catalysed reaction is (R)-4'-phosphopantetheine + ATP + H(+) = 3'-dephospho-CoA + diphosphate. The protein operates within cofactor biosynthesis; coenzyme A biosynthesis; CoA from (R)-pantothenate: step 4/5. Reversibly transfers an adenylyl group from ATP to 4'-phosphopantetheine, yielding dephospho-CoA (dPCoA) and pyrophosphate. The chain is Phosphopantetheine adenylyltransferase from Nostoc punctiforme (strain ATCC 29133 / PCC 73102).